A 74-amino-acid chain; its full sequence is Translation initiation factor IF-1 (74 aa).

Residues 1 to 72 enclose the S1-like domain; it reads MADTEKLKML…TRGRITYRHR (72 aa).

This sequence belongs to the IF-1 family. As to quaternary structure, component of the 30S ribosomal translation pre-initiation complex which assembles on the 30S ribosome in the order IF-2 and IF-3, IF-1 and N-formylmethionyl-tRNA(fMet); mRNA recruitment can occur at any time during PIC assembly.

The protein localises to the cytoplasm. Its function is as follows. One of the essential components for the initiation of protein synthesis. Stabilizes the binding of IF-2 and IF-3 on the 30S subunit to which N-formylmethionyl-tRNA(fMet) subsequently binds. Helps modulate mRNA selection, yielding the 30S pre-initiation complex (PIC). Upon addition of the 50S ribosomal subunit IF-1, IF-2 and IF-3 are released leaving the mature 70S translation initiation complex. The polypeptide is Translation initiation factor IF-1 (Ureaplasma parvum serovar 3 (strain ATCC 700970)).